A 196-amino-acid chain; its full sequence is Large ribosomal subunit protein eL15 (196 aa).

Residues 162–196 are disordered; the sequence is RGLTNAGRSNRGLQNRGKGAEHTRPSAGSGSRRGK.

Belongs to the eukaryotic ribosomal protein eL15 family.

This is Large ribosomal subunit protein eL15 from Haloquadratum walsbyi (strain DSM 16790 / HBSQ001).